Here is a 114-residue protein sequence, read N- to C-terminus: Iron-sulfur cluster insertion protein ErpA (114 aa).

Residues Cys-42, Cys-106, and Cys-108 each coordinate iron-sulfur cluster.

This sequence belongs to the HesB/IscA family. In terms of assembly, homodimer. Requires iron-sulfur cluster as cofactor.

Required for insertion of 4Fe-4S clusters for at least IspG. The sequence is that of Iron-sulfur cluster insertion protein ErpA from Yersinia pseudotuberculosis serotype O:1b (strain IP 31758).